The following is a 26-amino-acid chain: MVWLVWKRSTISRKNKKFFKTIFKKN.

It is found in the plastid. The protein resides in the chloroplast. This is an uncharacterized protein from Trieres chinensis (Marine centric diatom).